The primary structure comprises 600 residues: Sodium- and chloride-dependent betaine transporter (600 aa).

The interval 1 to 31 is disordered; sequence MGTSEHVPLPTDEAKAKELEQSQHSEEPDRG. The Cytoplasmic segment spans residues 1–38; that stretch reads MGTSEHVPLPTDEAKAKELEQSQHSEEPDRGQWTGKFD. A compositionally biased stretch (basic and acidic residues) spans 12 to 30; the sequence is DEAKAKELEQSQHSEEPDR. 3 helical membrane-spanning segments follow: residues 39-59, 68-88, and 116-136; these read FLMS…FPYL, FLVV…LMEV, and VVIA…AMFY. Residues 137–207 lie on the Extracellular side of the membrane; it reads MISSIAWVFP…DTGDISEFGG (71 aa). N-linked (GlcNAc...) asparagine glycosylation occurs at asparagine 165. 2 helical membrane passes run 208-228 and 237-257; these read IQWE…FALW and FVYF…IRGL. An N-linked (GlcNAc...) asparagine glycan is attached at asparagine 273. Helical transmembrane passes span 286-306, 321-341, 378-398, 420-440, 454-474, 499-519, and 536-556; these read AGTQ…ALGS, MCFI…SILG, VFAV…QVCM, SLGI…THSG, GYAL…GFGA, FCAP…YHPV, and WFLS…YLFF. Topologically, residues 557–600 are cytoplasmic; that stretch reads TNKHLTLKERVRKGLNLDGSFESPAKKNLVNNAEELKFIESSSQ.

This sequence belongs to the sodium:neurotransmitter symporter (SNF) family. Highly expressed in the head, the excretory canal, tail hypodermal cells, epidermis and vulval epithelial cells. Expressed in the excretory canal-associated neuron and in some non-amphidial sensory neurons in the head (at protein level).

It localises to the cell membrane. Its function is as follows. Betaine transporter dependent on Na(+) and Cl(-) ions that functions primarily in the epidermis to clear betaine from the extracellular space. Elicits current in response to betaine but not in response to GABA, L-carnitine, sarcosine, glycine or dimethylglycine. This Caenorhabditis elegans protein is Sodium- and chloride-dependent betaine transporter.